Consider the following 595-residue polypeptide: uncharacterized protein (595 aa).

Disordered regions lie at residues 50–159 (VNPS…KTKK), 398–430 (TYPTTPLFSEPTIPKPPQQPTTEPPSGFKPPSL), and 450–595 (VTEG…SLDK). Residues 83–122 (SNKSSALKKSNKSSNKSSNKSSNKSSNKSSNKSSNKSSNK) show a composition bias toward low complexity. Residues 123–132 (FPDKSDKSDS) are compositionally biased toward basic and acidic residues. Residues 137-146 (DNSDDSDDSS) show a composition bias toward acidic residues. Low complexity predominate over residues 398–409 (TYPTTPLFSEPT). Pro residues predominate over residues 410–420 (IPKPPQQPTTE). Positions 421-430 (PPSGFKPPSL) are enriched in low complexity. Positions 454-463 (KVVESDDHTS) are enriched in basic and acidic residues. Residues 467–476 (IPPPPPPPPS) are compositionally biased toward pro residues. A compositionally biased stretch (low complexity) spans 477-529 (ISSDNSSPNKSVKSSTKSSTKSSTKSSTKSSTKSSTKSPSKTPVKSPIKSSSK). A compositionally biased stretch (basic and acidic residues) spans 530–542 (LSDKKSPTKKIES). Residues 544–553 (GESDSESDSE) are compositionally biased toward acidic residues. Over residues 559–570 (TKKSTNKIKKIT) the composition is skewed to basic residues. A compositionally biased stretch (low complexity) spans 571–580 (NNKLENSNTK). Residues 581–595 (NNKKFSKKKTISLDK) show a composition bias toward basic residues.

This is an uncharacterized protein from Acanthamoeba polyphaga mimivirus (APMV).